Reading from the N-terminus, the 268-residue chain is Phosphatidylglycerol--prolipoprotein diacylglyceryl transferase (268 aa).

7 helical membrane-spanning segments follow: residues Pro-27–Leu-47, Leu-66–Tyr-86, Gly-104–Trp-124, Phe-130–Ile-150, Pro-181–Phe-201, Val-208–Thr-228, and Phe-242–Leu-262. Arg-149 is a binding site for a 1,2-diacyl-sn-glycero-3-phospho-(1'-sn-glycerol).

It belongs to the Lgt family.

Its subcellular location is the cell inner membrane. It catalyses the reaction L-cysteinyl-[prolipoprotein] + a 1,2-diacyl-sn-glycero-3-phospho-(1'-sn-glycerol) = an S-1,2-diacyl-sn-glyceryl-L-cysteinyl-[prolipoprotein] + sn-glycerol 1-phosphate + H(+). It participates in protein modification; lipoprotein biosynthesis (diacylglyceryl transfer). Functionally, catalyzes the transfer of the diacylglyceryl group from phosphatidylglycerol to the sulfhydryl group of the N-terminal cysteine of a prolipoprotein, the first step in the formation of mature lipoproteins. This is Phosphatidylglycerol--prolipoprotein diacylglyceryl transferase from Shewanella sp. (strain MR-4).